We begin with the raw amino-acid sequence, 968 residues long: RNA polymerase-associated protein RapA (968 aa).

A Helicase ATP-binding domain is found at 164–334; the sequence is DVGRRHAPRV…FARLRLLDPN (171 aa). ATP is bound at residue 177–184; the sequence is DEVGLGKT. A DEAH box motif is present at residues 280–283; it reads DEAH. The Helicase C-terminal domain maps to 490 to 662; the sequence is RVEWLMGYLT…YLASPDQTEG (173 aa).

This sequence belongs to the SNF2/RAD54 helicase family. RapA subfamily. As to quaternary structure, interacts with the RNAP. Has a higher affinity for the core RNAP than for the holoenzyme. Its ATPase activity is stimulated by binding to RNAP.

Transcription regulator that activates transcription by stimulating RNA polymerase (RNAP) recycling in case of stress conditions such as supercoiled DNA or high salt concentrations. Probably acts by releasing the RNAP, when it is trapped or immobilized on tightly supercoiled DNA. Does not activate transcription on linear DNA. Probably not involved in DNA repair. The sequence is that of RNA polymerase-associated protein RapA from Escherichia fergusonii (strain ATCC 35469 / DSM 13698 / CCUG 18766 / IAM 14443 / JCM 21226 / LMG 7866 / NBRC 102419 / NCTC 12128 / CDC 0568-73).